A 725-amino-acid polypeptide reads, in one-letter code: Ribosomal RNA large subunit methyltransferase K/L (725 aa).

The region spanning 46–157 (VAYRLCLWSR…RGQATLSLDL (112 aa)) is the THUMP domain.

It belongs to the methyltransferase superfamily. RlmKL family.

The protein resides in the cytoplasm. The catalysed reaction is guanosine(2445) in 23S rRNA + S-adenosyl-L-methionine = N(2)-methylguanosine(2445) in 23S rRNA + S-adenosyl-L-homocysteine + H(+). The enzyme catalyses guanosine(2069) in 23S rRNA + S-adenosyl-L-methionine = N(2)-methylguanosine(2069) in 23S rRNA + S-adenosyl-L-homocysteine + H(+). In terms of biological role, specifically methylates the guanine in position 2445 (m2G2445) and the guanine in position 2069 (m7G2069) of 23S rRNA. This chain is Ribosomal RNA large subunit methyltransferase K/L, found in Pseudomonas aeruginosa (strain ATCC 15692 / DSM 22644 / CIP 104116 / JCM 14847 / LMG 12228 / 1C / PRS 101 / PAO1).